Reading from the N-terminus, the 227-residue chain is Urease accessory protein UreF (227 aa).

Belongs to the UreF family. UreD, UreF and UreG form a complex that acts as a GTP-hydrolysis-dependent molecular chaperone, activating the urease apoprotein by helping to assemble the nickel containing metallocenter of UreC. The UreE protein probably delivers the nickel.

It localises to the cytoplasm. Required for maturation of urease via the functional incorporation of the urease nickel metallocenter. The protein is Urease accessory protein UreF of Blochmanniella floridana.